Here is a 252-residue protein sequence, read N- to C-terminus: 3-dehydroquinate dehydratase (252 aa).

3-dehydroquinate contacts are provided by residues Ser21, 46 to 48 (EWR), and Arg82. Residue His143 is the Proton donor/acceptor of the active site. Lys170 serves as the catalytic Schiff-base intermediate with substrate. 3-dehydroquinate-binding residues include Arg213, Ser232, and Gln236.

It belongs to the type-I 3-dehydroquinase family. In terms of assembly, homodimer.

The catalysed reaction is 3-dehydroquinate = 3-dehydroshikimate + H2O. It functions in the pathway metabolic intermediate biosynthesis; chorismate biosynthesis; chorismate from D-erythrose 4-phosphate and phosphoenolpyruvate: step 3/7. Functionally, involved in the third step of the chorismate pathway, which leads to the biosynthesis of aromatic amino acids. Catalyzes the cis-dehydration of 3-dehydroquinate (DHQ) and introduces the first double bond of the aromatic ring to yield 3-dehydroshikimate. This Escherichia coli O157:H7 protein is 3-dehydroquinate dehydratase.